A 197-amino-acid polypeptide reads, in one-letter code: dITP/XTP pyrophosphatase (197 aa).

Substrate is bound at residue 8–13 (TGNQGK). Catalysis depends on Asp-69, which acts as the Proton acceptor. Asp-69 serves as a coordination point for Mg(2+). Residues Ser-70, 154–157 (FGYD), Lys-177, and 182–183 (HR) contribute to the substrate site.

Belongs to the HAM1 NTPase family. As to quaternary structure, homodimer. Mg(2+) serves as cofactor.

It catalyses the reaction XTP + H2O = XMP + diphosphate + H(+). The enzyme catalyses dITP + H2O = dIMP + diphosphate + H(+). It carries out the reaction ITP + H2O = IMP + diphosphate + H(+). Pyrophosphatase that catalyzes the hydrolysis of nucleoside triphosphates to their monophosphate derivatives, with a high preference for the non-canonical purine nucleotides XTP (xanthosine triphosphate), dITP (deoxyinosine triphosphate) and ITP. Seems to function as a house-cleaning enzyme that removes non-canonical purine nucleotides from the nucleotide pool, thus preventing their incorporation into DNA/RNA and avoiding chromosomal lesions. This Photobacterium profundum (strain SS9) protein is dITP/XTP pyrophosphatase.